Consider the following 211-residue polypeptide: Prolactin-1 (211 aa).

The N-terminal stretch at 1-23 is a signal peptide; the sequence is MARRSQGTKLHLAVLCLVVSCHA. Intrachain disulfides connect Cys69–Cys184 and Cys201–Cys211.

It belongs to the somatotropin/prolactin family.

The protein resides in the secreted. In Oncorhynchus keta (Chum salmon), this protein is Prolactin-1 (prl1).